The chain runs to 180 residues: ATP synthase subunit delta (180 aa).

The protein belongs to the ATPase delta chain family. F-type ATPases have 2 components, F(1) - the catalytic core - and F(0) - the membrane proton channel. F(1) has five subunits: alpha(3), beta(3), gamma(1), delta(1), epsilon(1). F(0) has three main subunits: a(1), b(2) and c(10-14). The alpha and beta chains form an alternating ring which encloses part of the gamma chain. F(1) is attached to F(0) by a central stalk formed by the gamma and epsilon chains, while a peripheral stalk is formed by the delta and b chains.

It localises to the cell membrane. In terms of biological role, f(1)F(0) ATP synthase produces ATP from ADP in the presence of a proton or sodium gradient. F-type ATPases consist of two structural domains, F(1) containing the extramembraneous catalytic core and F(0) containing the membrane proton channel, linked together by a central stalk and a peripheral stalk. During catalysis, ATP synthesis in the catalytic domain of F(1) is coupled via a rotary mechanism of the central stalk subunits to proton translocation. Functionally, this protein is part of the stalk that links CF(0) to CF(1). It either transmits conformational changes from CF(0) to CF(1) or is implicated in proton conduction. This is ATP synthase subunit delta from Lactobacillus delbrueckii subsp. bulgaricus (strain ATCC BAA-365 / Lb-18).